The following is a 269-amino-acid chain: Malonyl-[acyl-carrier protein] O-methyltransferase (269 aa).

The protein belongs to the methyltransferase superfamily.

The enzyme catalyses malonyl-[ACP] + S-adenosyl-L-methionine = malonyl-[ACP] methyl ester + S-adenosyl-L-homocysteine. It functions in the pathway cofactor biosynthesis; biotin biosynthesis. Functionally, converts the free carboxyl group of a malonyl-thioester to its methyl ester by transfer of a methyl group from S-adenosyl-L-methionine (SAM). It allows to synthesize pimeloyl-ACP via the fatty acid synthetic pathway. This Bacillus anthracis protein is Malonyl-[acyl-carrier protein] O-methyltransferase.